A 400-amino-acid polypeptide reads, in one-letter code: Dual-specificity RNA methyltransferase RlmN (400 aa).

Glu-125 serves as the catalytic Proton acceptor. Residues 131–372 (ETDRGTLCVS…VRTPRGRDIL (242 aa)) enclose the Radical SAM core domain. An intrachain disulfide couples Cys-138 to Cys-375. Residues Cys-145, Cys-149, and Cys-152 each contribute to the [4Fe-4S] cluster site. S-adenosyl-L-methionine is bound by residues 201–202 (GE), Ser-233, 255–257 (SLH), and Asn-332. The active-site S-methylcysteine intermediate is Cys-375.

Belongs to the radical SAM superfamily. RlmN family. It depends on [4Fe-4S] cluster as a cofactor.

Its subcellular location is the cytoplasm. It carries out the reaction adenosine(2503) in 23S rRNA + 2 reduced [2Fe-2S]-[ferredoxin] + 2 S-adenosyl-L-methionine = 2-methyladenosine(2503) in 23S rRNA + 5'-deoxyadenosine + L-methionine + 2 oxidized [2Fe-2S]-[ferredoxin] + S-adenosyl-L-homocysteine. It catalyses the reaction adenosine(37) in tRNA + 2 reduced [2Fe-2S]-[ferredoxin] + 2 S-adenosyl-L-methionine = 2-methyladenosine(37) in tRNA + 5'-deoxyadenosine + L-methionine + 2 oxidized [2Fe-2S]-[ferredoxin] + S-adenosyl-L-homocysteine. Specifically methylates position 2 of adenine 2503 in 23S rRNA and position 2 of adenine 37 in tRNAs. m2A2503 modification seems to play a crucial role in the proofreading step occurring at the peptidyl transferase center and thus would serve to optimize ribosomal fidelity. This is Dual-specificity RNA methyltransferase RlmN from Bradyrhizobium diazoefficiens (strain JCM 10833 / BCRC 13528 / IAM 13628 / NBRC 14792 / USDA 110).